A 129-amino-acid polypeptide reads, in one-letter code: MIKQKKKIIKITKKKFPKGIVHIKTTYNNVLVSVSDPKGNVIAWSSSGACGFKSSKKATPLATKTTTAIAVKKAIEQGLQKVEINISGPGTGRETALKCVQSLGLRISCIRDVTPLPHNGCRPSKRRRI.

This sequence belongs to the universal ribosomal protein uS11 family. Part of the 30S ribosomal subunit.

Its subcellular location is the plastid. The protein resides in the chloroplast. This chain is Small ribosomal subunit protein uS11c, found in Euglena gracilis.